The following is a 309-amino-acid chain: Aspartate carbamoyltransferase catalytic subunit (309 aa).

R58 and T59 together coordinate carbamoyl phosphate. K87 contacts L-aspartate. The carbamoyl phosphate site is built by R108, H136, and Q139. L-aspartate-binding residues include R168 and R229. Carbamoyl phosphate-binding residues include L268 and P269.

It belongs to the aspartate/ornithine carbamoyltransferase superfamily. ATCase family. Heterooligomer of catalytic and regulatory chains.

It carries out the reaction carbamoyl phosphate + L-aspartate = N-carbamoyl-L-aspartate + phosphate + H(+). It functions in the pathway pyrimidine metabolism; UMP biosynthesis via de novo pathway; (S)-dihydroorotate from bicarbonate: step 2/3. In terms of biological role, catalyzes the condensation of carbamoyl phosphate and aspartate to form carbamoyl aspartate and inorganic phosphate, the committed step in the de novo pyrimidine nucleotide biosynthesis pathway. This chain is Aspartate carbamoyltransferase catalytic subunit, found in Methanosarcina mazei (strain ATCC BAA-159 / DSM 3647 / Goe1 / Go1 / JCM 11833 / OCM 88) (Methanosarcina frisia).